The following is a 239-amino-acid chain: 1-(5-phosphoribosyl)-5-[(5-phosphoribosylamino)methylideneamino] imidazole-4-carboxamide isomerase (239 aa).

Asp8 functions as the Proton acceptor in the catalytic mechanism. The Proton donor role is filled by Asp129.

It belongs to the HisA/HisF family.

Its subcellular location is the cytoplasm. The enzyme catalyses 1-(5-phospho-beta-D-ribosyl)-5-[(5-phospho-beta-D-ribosylamino)methylideneamino]imidazole-4-carboxamide = 5-[(5-phospho-1-deoxy-D-ribulos-1-ylimino)methylamino]-1-(5-phospho-beta-D-ribosyl)imidazole-4-carboxamide. The protein operates within amino-acid biosynthesis; L-histidine biosynthesis; L-histidine from 5-phospho-alpha-D-ribose 1-diphosphate: step 4/9. The sequence is that of 1-(5-phosphoribosyl)-5-[(5-phosphoribosylamino)methylideneamino] imidazole-4-carboxamide isomerase from Bacillus cytotoxicus (strain DSM 22905 / CIP 110041 / 391-98 / NVH 391-98).